The sequence spans 210 residues: Probable membrane protein MT1774 (210 aa).

Transmembrane regions (helical) follow at residues 43 to 63 (AVVM…AAAA) and 165 to 185 (ALAA…LLAL).

The protein localises to the cell membrane. This chain is Probable membrane protein MT1774, found in Mycobacterium tuberculosis (strain CDC 1551 / Oshkosh).